The primary structure comprises 325 residues: UPF0285 protein MM_0679 (325 aa).

It belongs to the UPF0285 family.

This Methanosarcina mazei (strain ATCC BAA-159 / DSM 3647 / Goe1 / Go1 / JCM 11833 / OCM 88) (Methanosarcina frisia) protein is UPF0285 protein MM_0679.